The primary structure comprises 531 residues: Protein arginine N-methyltransferase 3 (531 aa).

Positions 1–43 (MCSLASGATGGRGAVENEEDLPELSDSGDEAAWEDEDDADLPH) are disordered. Cys-2 carries the N-acetylcysteine modification. A compositionally biased stretch (acidic residues) spans 16 to 39 (ENEEDLPELSDSGDEAAWEDEDDA). 2 positions are modified to phosphoserine: Ser-25 and Ser-27. The C2H2-type zinc finger occupies 48–71 (TPCLFCNRLFTSAEETFSHCKSEH). Residues 48 to 71 (TPCLFCNRLFTSAEETFSHCKSEH) form an interaction with ZNF200 region. Ser-171 is subject to Phosphoserine. The tract at residues 186 to 531 (MKQFAQDFVM…NNSTQTYGLQ (346 aa)) is mediates interaction with ALDH1A1. An SAM-dependent MTase PRMT-type domain is found at 217 to 531 (DGVYFSSYGH…NNSTQTYGLQ (315 aa)). Positions 239, 263, 285, 313, and 314 each coordinate S-adenosyl-L-homocysteine. Active-site residues include Glu-329 and Glu-338. Ser-343 lines the S-adenosyl-L-homocysteine pocket.

Belongs to the class I-like SAM-binding methyltransferase superfamily. Protein arginine N-methyltransferase family. In terms of assembly, monomer and homodimer. Interacts with EPB41L3 (via FERM domain); the interaction is direct and inhibits the protein-arginine N-methyltransferase activity of PRMT3. Interacts with the 40S ribosomal protein RPS2. Interacts with ALDH1A1; the interaction is direct, inhibits ALDH1A1 aldehyde dehydrogenase activity and is independent of the methyltransferase activity of PRMT3. Interacts (via zinc-finger) with ZNF200 (via C-terminus); the interaction is direct and required to localize PRMT3 to the nucleus and inhibit its proteasomal degradation.

It is found in the cytoplasm. It localises to the cytosol. The protein localises to the nucleus. It carries out the reaction L-arginyl-[protein] + S-adenosyl-L-methionine = N(omega)-methyl-L-arginyl-[protein] + S-adenosyl-L-homocysteine + H(+). It catalyses the reaction L-arginyl-[protein] + 2 S-adenosyl-L-methionine = N(omega),N(omega)-dimethyl-L-arginyl-[protein] + 2 S-adenosyl-L-homocysteine + 2 H(+). Inhibited by N-ethylmaleimide and high concentrations of zinc chloride. Allosterically inhibited by SGC707. Allosterically inhibited by (1-(benzo[d][1,2,3]thiadiazol- 6-yl)-3-(2-cyclohexenylethyl)urea) and derivatives thereof. Protein-arginine N-methyltransferase that catalyzes both the monomethylation and asymmetric dimethylation of the guanidino nitrogens of arginine residues in target proteins, and therefore falls into the group of type I methyltransferases. Catalyzes the asymmetric arginine dimethylation at multiple sites in the Arg/Gly-rich region of small ribosomal subunit protein uS5/RPS2. Also appears to methylate other ribosomal proteins. May regulate retinoic acid synthesis and signaling by inhibiting ALDH1A1 retinal dehydrogenase activity. Contributes to methylation of histone H4 'Arg-3', a specific tag for epigenetic transcriptional activation. Mediates asymmetric arginine dimethylation of histone H4 'Arg-3' (H4R3me2a) in the promoter region of miRNA miR-3648, to promote its transcription and osteogenesis. This Homo sapiens (Human) protein is Protein arginine N-methyltransferase 3.